A 251-amino-acid chain; its full sequence is MSNQAENTTHFGFKTVQEDTKADLVAGVFHSVAAKYDIMNDVLSMGVHRIWKRFTVDCSGIRKGQKVLDLAGGTGDLTAKFSRIVGQTGQVTLADINDSMLKVGRSKLRDLGIVGNVSYVQANAEELPFPDNHFDLITIAFGLRNVTDKDKALASMYRVLKPGGRLLVLEFSTPLYEPLSKFYDFYSFNVLPKLGKLIANDSESYQYLAESIRMHPGQEILKEMMNSANFEGCEYFNLSGGIVALHRGYKY.

S-adenosyl-L-methionine is bound by residues T74, D95, and 123-124 (NA).

This sequence belongs to the class I-like SAM-binding methyltransferase superfamily. MenG/UbiE family.

The catalysed reaction is a 2-demethylmenaquinol + S-adenosyl-L-methionine = a menaquinol + S-adenosyl-L-homocysteine + H(+). It catalyses the reaction a 2-methoxy-6-(all-trans-polyprenyl)benzene-1,4-diol + S-adenosyl-L-methionine = a 5-methoxy-2-methyl-3-(all-trans-polyprenyl)benzene-1,4-diol + S-adenosyl-L-homocysteine + H(+). It participates in quinol/quinone metabolism; menaquinone biosynthesis; menaquinol from 1,4-dihydroxy-2-naphthoate: step 2/2. Its pathway is cofactor biosynthesis; ubiquinone biosynthesis. In terms of biological role, methyltransferase required for the conversion of demethylmenaquinol (DMKH2) to menaquinol (MKH2) and the conversion of 2-polyprenyl-6-methoxy-1,4-benzoquinol (DDMQH2) to 2-polyprenyl-3-methyl-6-methoxy-1,4-benzoquinol (DMQH2). This is Ubiquinone/menaquinone biosynthesis C-methyltransferase UbiE from Psychromonas ingrahamii (strain DSM 17664 / CCUG 51855 / 37).